Here is a 197-residue protein sequence, read N- to C-terminus: Large ribosomal subunit protein eL15 (197 aa).

The segment covering 163 to 172 (GKTSAGRKGR) has biased composition (basic residues). Residues 163 to 197 (GKTSAGRKGRGMQTRGTGTEKTRPSVRSNLNRSKK) form a disordered region. The span at 186–197 (PSVRSNLNRSKK) shows a compositional bias: polar residues.

It belongs to the eukaryotic ribosomal protein eL15 family.

In Methanococcoides burtonii (strain DSM 6242 / NBRC 107633 / OCM 468 / ACE-M), this protein is Large ribosomal subunit protein eL15.